The primary structure comprises 22 residues: Caerin-3.1 (22 aa).

Lys22 carries the lysine amide modification.

The protein belongs to the frog skin active peptide (FSAP) family. Caerin subfamily. In terms of tissue distribution, expressed by the skin dorsal glands.

It is found in the secreted. Its function is as follows. Antibacterial peptide with narrow spectrum of activity. Inhibits the formation of NO by neuronal nitric oxide synthase. The chain is Caerin-3.1 from Litoria rothii (Roth's tree frog).